Consider the following 168-residue polypeptide: ATP synthase F(1) complex subunit delta, mitochondrial (168 aa).

The N-terminal 22 residues, 1 to 22 (MLPAALLRHPGLRRLVLQARTY), are a transit peptide targeting the mitochondrion. N6-acetyllysine; alternate is present on residues Lys-136 and Lys-165. N6-succinyllysine; alternate occurs at positions 136 and 165.

This sequence belongs to the ATPase epsilon chain family. Component of the ATP synthase complex composed at least of ATP5F1A/subunit alpha, ATP5F1B/subunit beta, ATP5MC1/subunit c (homooctomer), MT-ATP6/subunit a, MT-ATP8/subunit 8, ATP5ME/subunit e, ATP5MF/subunit f, ATP5MG/subunit g, ATP5MK/subunit k, ATP5MJ/subunit j, ATP5F1C/subunit gamma, ATP5F1D/subunit delta, ATP5F1E/subunit epsilon, ATP5PF/subunit F6, ATP5PB/subunit b, ATP5PD/subunit d, ATP5PO/subunit OSCP. ATP synthase complex consists of a soluble F(1) head domain (subunits alpha(3) and beta(3)) - the catalytic core - and a membrane F(0) domain - the membrane proton channel (subunits c, a, 8, e, f, g, k and j). These two domains are linked by a central stalk (subunits gamma, delta, and epsilon) rotating inside the F1 region and a stationary peripheral stalk (subunits F6, b, d, and OSCP). Component of a complex composed at least by ATPIF1, ATP5F1A, ATP5F1B, ATP5F1C AND ATP5F1E.

The protein localises to the mitochondrion. The protein resides in the mitochondrion inner membrane. Subunit delta, of the mitochondrial membrane ATP synthase complex (F(1)F(0) ATP synthase or Complex V) that produces ATP from ADP in the presence of a proton gradient across the membrane which is generated by electron transport complexes of the respiratory chain. ATP synthase complex consist of a soluble F(1) head domain - the catalytic core - and a membrane F(1) domain - the membrane proton channel. These two domains are linked by a central stalk rotating inside the F(1) region and a stationary peripheral stalk. During catalysis, ATP synthesis in the catalytic domain of F(1) is coupled via a rotary mechanism of the central stalk subunits to proton translocation. In vivo, can only synthesize ATP although its ATP hydrolase activity can be activated artificially in vitro. With the central stalk subunit gamma, is essential for the biogenesis of F(1) catalytic part of the ATP synthase complex namely in the formation of F1 assembly intermediate. The sequence is that of ATP synthase F(1) complex subunit delta, mitochondrial from Rattus norvegicus (Rat).